Consider the following 327-residue polypeptide: Endochitinase CH5B (327 aa).

The first 26 residues, 1–26 (MKKNRMMIMICSVGVVWMLLVGGSYG), serve as a signal peptide directing secretion. Residues 27–67 (EQCGRQAGGALCPGGNCCSQFGWCGSTTDYCGKDCQSQCGG) form the Chitin-binding type-1 domain. Disulfide bonds link Cys-29/Cys-44, Cys-38/Cys-50, Cys-43/Cys-57, Cys-61/Cys-65, Cys-96/Cys-158, Cys-169/Cys-177, and Cys-276/Cys-308. The active-site Proton donor is Glu-140. Positions 317-327 (SLFLSDLVTSQ) are cleaved as a propeptide — removed in mature form.

The protein belongs to the glycosyl hydrolase 19 family. Chitinase class I subfamily.

It localises to the vacuole. It carries out the reaction Random endo-hydrolysis of N-acetyl-beta-D-glucosaminide (1-&gt;4)-beta-linkages in chitin and chitodextrins.. Its function is as follows. Defense against chitin-containing fungal pathogens. The protein is Endochitinase CH5B of Phaseolus vulgaris (Kidney bean).